Reading from the N-terminus, the 120-residue chain is Large ribosomal subunit protein bL17 (120 aa).

This sequence belongs to the bacterial ribosomal protein bL17 family. Part of the 50S ribosomal subunit. Contacts protein L32.

The protein is Large ribosomal subunit protein bL17 of Anoxybacillus flavithermus (strain DSM 21510 / WK1).